The following is a 29-amino-acid chain: Cycloviolacin-O21 (29 aa).

The segment at residues 1 to 29 (GLPVCGETCVTGSCYTPGCTCSWPVCTRN) is a cross-link (cyclopeptide (Gly-Asn)). Cystine bridges form between Cys5/Cys19, Cys9/Cys21, and Cys14/Cys26.

In terms of processing, this is a cyclic peptide. As to expression, expressed in leaves, petals, petioles, and runners but not in roots (at protein level).

Functionally, probably participates in a plant defense mechanism. The polypeptide is Cycloviolacin-O21 (Viola odorata (Sweet violet)).